We begin with the raw amino-acid sequence, 241 residues long: uncharacterized protein (241 aa).

This is an uncharacterized protein from Ictaluridae (bullhead catfishes).